Consider the following 128-residue polypeptide: Aspartate 1-decarboxylase (128 aa).

Serine 25 serves as the catalytic Schiff-base intermediate with substrate; via pyruvic acid. Serine 25 is subject to Pyruvic acid (Ser). Substrate is bound at residue threonine 57. The active-site Proton donor is the tyrosine 58. Substrate is bound at residue 73-75 (GAA).

This sequence belongs to the PanD family. In terms of assembly, heterooctamer of four alpha and four beta subunits. The cofactor is pyruvate. Post-translationally, is synthesized initially as an inactive proenzyme, which is activated by self-cleavage at a specific serine bond to produce a beta-subunit with a hydroxyl group at its C-terminus and an alpha-subunit with a pyruvoyl group at its N-terminus.

The protein localises to the cytoplasm. It catalyses the reaction L-aspartate + H(+) = beta-alanine + CO2. It participates in cofactor biosynthesis; (R)-pantothenate biosynthesis; beta-alanine from L-aspartate: step 1/1. Catalyzes the pyruvoyl-dependent decarboxylation of aspartate to produce beta-alanine. This chain is Aspartate 1-decarboxylase, found in Chlorobium luteolum (strain DSM 273 / BCRC 81028 / 2530) (Pelodictyon luteolum).